The chain runs to 459 residues: Chromosomal replication initiator protein DnaA (459 aa).

Positions 1-83 (MKNAREIWRN…NKLEIHFIEE (83 aa)) are domain I, interacts with DnaA modulators. Positions 83-121 (ESQAHKYAPADGSSNESIAVTETKEQPVLLPSKEEGDLG) are domain II. The interval 122–338 (QLNDKYIFET…GALTRVVAYA (217 aa)) is domain III, AAA+ region. ATP is bound by residues Gly-166, Gly-168, Lys-169, and Thr-170. Residues 339–459 (KLVGRPIDPD…IQTLKKALSN (121 aa)) form a domain IV, binds dsDNA region.

It belongs to the DnaA family. As to quaternary structure, oligomerizes as a right-handed, spiral filament on DNA at oriC.

The protein resides in the cytoplasm. Its function is as follows. Plays an essential role in the initiation and regulation of chromosomal replication. ATP-DnaA binds to the origin of replication (oriC) to initiate formation of the DNA replication initiation complex once per cell cycle. Binds the DnaA box (a 9 base pair repeat at the origin) and separates the double-stranded (ds)DNA. Forms a right-handed helical filament on oriC DNA; dsDNA binds to the exterior of the filament while single-stranded (ss)DNA is stabiized in the filament's interior. The ATP-DnaA-oriC complex binds and stabilizes one strand of the AT-rich DNA unwinding element (DUE), permitting loading of DNA polymerase. After initiation quickly degrades to an ADP-DnaA complex that is not apt for DNA replication. Binds acidic phospholipids. This Exiguobacterium sp. (strain ATCC BAA-1283 / AT1b) protein is Chromosomal replication initiator protein DnaA.